Here is a 74-residue protein sequence, read N- to C-terminus: ATP synthase subunit c (74 aa).

2 helical membrane passes run 8-28 (FIGI…VSNI) and 52-72 (IGAG…MLLI).

This sequence belongs to the ATPase C chain family. As to quaternary structure, F-type ATPases have 2 components, F(1) - the catalytic core - and F(0) - the membrane proton channel. F(1) has five subunits: alpha(3), beta(3), gamma(1), delta(1), epsilon(1). F(0) has three main subunits: a(1), b(2) and c(10-14). The alpha and beta chains form an alternating ring which encloses part of the gamma chain. F(1) is attached to F(0) by a central stalk formed by the gamma and epsilon chains, while a peripheral stalk is formed by the delta and b chains.

The protein resides in the cell inner membrane. F(1)F(0) ATP synthase produces ATP from ADP in the presence of a proton or sodium gradient. F-type ATPases consist of two structural domains, F(1) containing the extramembraneous catalytic core and F(0) containing the membrane proton channel, linked together by a central stalk and a peripheral stalk. During catalysis, ATP synthesis in the catalytic domain of F(1) is coupled via a rotary mechanism of the central stalk subunits to proton translocation. In terms of biological role, key component of the F(0) channel; it plays a direct role in translocation across the membrane. A homomeric c-ring of between 10-14 subunits forms the central stalk rotor element with the F(1) delta and epsilon subunits. The sequence is that of ATP synthase subunit c from Rickettsia felis (strain ATCC VR-1525 / URRWXCal2) (Rickettsia azadi).